The sequence spans 280 residues: 4-deoxy-L-threo-5-hexosulose-uronate ketol-isomerase (280 aa).

Residues His198, His200, Glu205, and His247 each contribute to the Zn(2+) site.

The protein belongs to the KduI family. Requires Zn(2+) as cofactor.

The enzyme catalyses 5-dehydro-4-deoxy-D-glucuronate = 3-deoxy-D-glycero-2,5-hexodiulosonate. It functions in the pathway glycan metabolism; pectin degradation; 2-dehydro-3-deoxy-D-gluconate from pectin: step 4/5. Functionally, catalyzes the isomerization of 5-dehydro-4-deoxy-D-glucuronate to 3-deoxy-D-glycero-2,5-hexodiulosonate. This chain is 4-deoxy-L-threo-5-hexosulose-uronate ketol-isomerase, found in Bacteroides fragilis (strain ATCC 25285 / DSM 2151 / CCUG 4856 / JCM 11019 / LMG 10263 / NCTC 9343 / Onslow / VPI 2553 / EN-2).